A 166-amino-acid polypeptide reads, in one-letter code: Crossover junction endodeoxyribonuclease RuvC (166 aa).

Active-site residues include D7, E67, and D140. Residues D7, E67, and D140 each contribute to the Mg(2+) site.

This sequence belongs to the RuvC family. Homodimer which binds Holliday junction (HJ) DNA. The HJ becomes 2-fold symmetrical on binding to RuvC with unstacked arms; it has a different conformation from HJ DNA in complex with RuvA. In the full resolvosome a probable DNA-RuvA(4)-RuvB(12)-RuvC(2) complex forms which resolves the HJ. It depends on Mg(2+) as a cofactor.

The protein localises to the cytoplasm. The enzyme catalyses Endonucleolytic cleavage at a junction such as a reciprocal single-stranded crossover between two homologous DNA duplexes (Holliday junction).. In terms of biological role, the RuvA-RuvB-RuvC complex processes Holliday junction (HJ) DNA during genetic recombination and DNA repair. Endonuclease that resolves HJ intermediates. Cleaves cruciform DNA by making single-stranded nicks across the HJ at symmetrical positions within the homologous arms, yielding a 5'-phosphate and a 3'-hydroxyl group; requires a central core of homology in the junction. The consensus cleavage sequence is 5'-(A/T)TT(C/G)-3'. Cleavage occurs on the 3'-side of the TT dinucleotide at the point of strand exchange. HJ branch migration catalyzed by RuvA-RuvB allows RuvC to scan DNA until it finds its consensus sequence, where it cleaves and resolves the cruciform DNA. The protein is Crossover junction endodeoxyribonuclease RuvC of Ruminiclostridium cellulolyticum (strain ATCC 35319 / DSM 5812 / JCM 6584 / H10) (Clostridium cellulolyticum).